A 218-amino-acid polypeptide reads, in one-letter code: Oxidative stress regulator AosR (218 aa).

Residues 5–9 (CGRRC) carry the CXXXC motif. Residues Cys-5 and Cys-9 are joined by a disulfide bond.

The protein belongs to the AosR family. In terms of assembly, homodimer. Under oxidative stress, interacts with the extracytoplasmic-function (ECF) RNA polymerase sigma factor SigH.

Its activity is regulated as follows. Activity is modulated by the formation of a disulfide bound within the N-terminal Cys-X-X-X-Cys (CXXXC) motif. This intramolecular disulfide bond is formed in response to oxidative stress, and results in oxidative stress-dependent interaction with the sigma factor SigH. Transcription factor crucial for intra-mycobacterial redox homeostasis and protection against host-derived oxidative and nitrosative radicals. In response to oxidative stress, interacts with the ECF sigma factor SigH and, in conjunction with SigH, binds to an auxiliary promoter upstream of mec-cysO-cysM, leading to the transcriptional activation of these genes encoding a non-canonical actinomycete-specific cysteine biosynthesis pathway. Increased transcription of mec-cysO-cysM results in enhanced production of L-cysteine and cysteine-derived antioxidant molecules. Increased production of cysteine protects mycobacteria cells from host phagocyte-derived oxidative and nitrosative stress, thus facilitating the mycobacterial growth in the host. This Mycobacterium bovis (strain ATCC BAA-935 / AF2122/97) protein is Oxidative stress regulator AosR.